We begin with the raw amino-acid sequence, 44 residues long: MESPAFFFSLFVWCLLLSITAYSLYVGFGPPSKQLRDPFEEHED.

A helical membrane pass occupies residues 6-26; that stretch reads FFFSLFVWCLLLSITAYSLYV.

Belongs to the PsbN family.

Its subcellular location is the plastid. It localises to the chloroplast thylakoid membrane. Functionally, may play a role in photosystem I and II biogenesis. This Tupiella akineta (Green alga) protein is Protein PsbN.